Here is a 791-residue protein sequence, read N- to C-terminus: Protein CLASP-2 (791 aa).

Low complexity-rich tracts occupy residues 259–271 (ASDA…SVNS), 323–334 (RTPNTRPMTTRT), and 372–381 (SQPGSRNGSP). Disordered stretches follow at residues 259–283 (ASDA…SKLS), 315–391 (TRMT…TGTL), and 422–454 (AMNT…PQKS). Positions 422-434 (AMNTAKESLGQPS) are enriched in polar residues.

This sequence belongs to the CLASP family. Interacts with hcp-1 and hcp-2.

Its subcellular location is the cytoplasm. It is found in the cytoskeleton. The protein localises to the microtubule organizing center. It localises to the centrosome. The protein resides in the chromosome. Its subcellular location is the centromere. It is found in the kinetochore. The protein localises to the spindle. Its function is as follows. Probable microtubule plus-end tracking protein that promotes the stabilization of dynamic microtubules. Required for the formation of mitotic and meiotic spindles. Specifically promotes the polymerization of kinetochore-bound microtubules. Also required for cytoplasmic streaming. In Caenorhabditis briggsae, this protein is Protein CLASP-2 (cls-2).